The primary structure comprises 575 residues: Proline--tRNA ligase (575 aa).

It belongs to the class-II aminoacyl-tRNA synthetase family. ProS type 1 subfamily. As to quaternary structure, homodimer.

It localises to the cytoplasm. It carries out the reaction tRNA(Pro) + L-proline + ATP = L-prolyl-tRNA(Pro) + AMP + diphosphate. Its function is as follows. Catalyzes the attachment of proline to tRNA(Pro) in a two-step reaction: proline is first activated by ATP to form Pro-AMP and then transferred to the acceptor end of tRNA(Pro). As ProRS can inadvertently accommodate and process non-cognate amino acids such as alanine and cysteine, to avoid such errors it has two additional distinct editing activities against alanine. One activity is designated as 'pretransfer' editing and involves the tRNA(Pro)-independent hydrolysis of activated Ala-AMP. The other activity is designated 'posttransfer' editing and involves deacylation of mischarged Ala-tRNA(Pro). The misacylated Cys-tRNA(Pro) is not edited by ProRS. The chain is Proline--tRNA ligase from Desulfitobacterium hafniense (strain DSM 10664 / DCB-2).